A 414-amino-acid chain; its full sequence is Multidrug resistance protein MdtG (414 aa).

Helical transmembrane passes span 14–34 (LFVTWLGCFLTGAAFSLIMPF), 56–76 (LVFSITFLFSAIAAPFWGSLA), 89–109 (ALGMGIVMVLMGMAQNIWQFL), 113–133 (ALLGLLGGFIPNANALIATQV), 144–164 (TLSTGGVSGALIGPLIGGLLA), 171–191 (PVFFITAAVLFACFVMTWFYV), 219–239 (ILSLFVTTMIIQIATGSIAPI), 254–274 (LAFVSGMIASVPGVAALISAP), 288–308 (ILIAMLALSVLILIPMAFVQT), and 376–396 (AVFCVTAVVVLFNALYSYWCL).

It belongs to the major facilitator superfamily. DHA1 family. MdtG (TC 2.A.1.2.20) subfamily.

It is found in the cell inner membrane. The sequence is that of Multidrug resistance protein MdtG from Yersinia enterocolitica serotype O:8 / biotype 1B (strain NCTC 13174 / 8081).